Here is a 504-residue protein sequence, read N- to C-terminus: Anaerobic nitric oxide reductase transcription regulator NorR (504 aa).

Asp-57 bears the 4-aspartylphosphate mark. A Sigma-54 factor interaction domain is found at 187 to 416; the sequence is MIGLSPGMTQ…LEHAIHRAVV (230 aa). ATP contacts are provided by residues 215 to 222 and 278 to 287; these read GETGTGKE and ADNGTLFLDE. The H-T-H motif DNA-binding region spans 479–498; that stretch reads WAACARMLETDVANLHRLAK.

It functions in the pathway nitrogen metabolism; nitric oxide reduction. Functionally, required for the expression of anaerobic nitric oxide (NO) reductase, acts as a transcriptional activator for at least the norVW operon. Activation also requires sigma-54. This chain is Anaerobic nitric oxide reductase transcription regulator NorR, found in Shigella dysenteriae serotype 1 (strain Sd197).